The chain runs to 428 residues: Histone deacetylase 3 (428 aa).

A histone deacetylase region spans residues 3–316 (KTVAYFYDPD…WTYETSLLVD (314 aa)). Residues H17, G21, and K25 each coordinate 1D-myo-inositol 1,4,5,6-tetrakisphosphate. H135 is a catalytic residue. D170, H172, and D259 together coordinate Zn(2+). R265 contacts 1D-myo-inositol 1,4,5,6-tetrakisphosphate. A disordered region spans residues 385–428 (LSYDRTDEPDPEERGSEENYSRPEAANEFYDGDHDNDKESDVEI). Basic and acidic residues-rich tracts occupy residues 386 to 405 (SYDRTDEPDPEERGSEENYS) and 415 to 428 (DGDHDNDKESDVEI).

It belongs to the histone deacetylase family. HD type 1 subfamily.

The protein localises to the nucleus. It is found in the chromosome. It localises to the cytoplasm. Its subcellular location is the cytosol. It catalyses the reaction N(6)-acetyl-L-lysyl-[histone] + H2O = L-lysyl-[histone] + acetate. The catalysed reaction is N(6)-acetyl-L-lysyl-[protein] + H2O = L-lysyl-[protein] + acetate. The enzyme catalyses N(6)-(2E)-butenoyl-L-lysyl-[protein] + H2O = (2E)-2-butenoate + L-lysyl-[protein]. It carries out the reaction N(6)-(2-hydroxyisobutanoyl)-L-lysyl-[protein] + H2O = 2-hydroxy-2-methylpropanoate + L-lysyl-[protein]. It catalyses the reaction N(6)-[(S)-lactoyl]-L-lysyl-[protein] + H2O = (S)-lactate + L-lysyl-[protein]. Its activity is regulated as follows. Inositol tetraphosphate (1D-myo-inositol 1,4,5,6-tetrakisphosphate) promotes the histone deacetylase activity by acting as an intermolecular glue between HDAC3 and N-Cor repressor complex components. Its function is as follows. Histone deacetylase that catalyzes the deacetylation of lysine residues on the N-terminal part of the core histones (H2A, H2B, H3 and H4), and some other non-histone substrates. Histone deacetylation gives a tag for epigenetic repression and plays an important role in transcriptional regulation, cell cycle progression and developmental events. Histone deacetylases act via the formation of large multiprotein complexes, such as N-Cor repressor complex, which activate the histone deacetylase activity. Participates in the BCL6 transcriptional repressor activity by deacetylating the H3 'Lys-27' (H3K27) on enhancer elements, antagonizing EP300 acetyltransferase activity and repressing proximal gene expression. Also functions as a deacetylase for non-histone targets. In addition to protein deacetylase activity, also acts as a protein-lysine deacylase by recognizing other acyl groups: catalyzes removal of (2E)-butenoyl (crotonyl), lactoyl (lactyl) and 2-hydroxyisobutanoyl (2-hydroxyisobutyryl) acyl groups from lysine residues, leading to protein decrotonylation, delactylation and de-2-hydroxyisobutyrylation, respectively. The protein is Histone deacetylase 3 (HDAC3) of Gallus gallus (Chicken).